The chain runs to 448 residues: Glucan 1,3-beta-glucosidase I/II (448 aa).

Residues 1-19 (MLSLKTLLCTLLTVSSVLA) form the signal peptide. Residues 20-40 (TPVPARDPSSIQFVHEENKKR) constitute a propeptide that is removed on maturation. A glycan (N-linked (GlcNAc...) asparagine) is linked at N165. E232 (proton donor) is an active-site residue. An N-linked (GlcNAc...) asparagine glycan is attached at N325. E334 (nucleophile) is an active-site residue.

It belongs to the glycosyl hydrolase 5 (cellulase A) family.

It localises to the secreted. Its subcellular location is the cell wall. The enzyme catalyses Successive hydrolysis of beta-D-glucose units from the non-reducing ends of (1-&gt;3)-beta-D-glucans, releasing alpha-glucose.. Glucanases possibly play a role in cell expansion during growth, in cell-cell fusion during mating, and in spore release during sporulation. This enzyme hydrolyzes both 1,3-beta- and 1,6-beta-linkages and even has beta-glucosidase activity. It could also function biosynthetically as a transglycosylase. The protein is Glucan 1,3-beta-glucosidase I/II (EXG1) of Saccharomyces cerevisiae (strain ATCC 204508 / S288c) (Baker's yeast).